Consider the following 110-residue polypeptide: MRRAKLDKNATSNAVAYCSATGRHNLSATHASRLAFSVFSHPNVKAFLKSMEKETIDDMIMGRDELLSELTDIASTTIDDIVQIVHSSDNMMNVKRGRFIQDLSRSLLTT.

DNA-binding regions (H-T-H motif) lie at residues 12-31 (SNAVAYCSATGRHNLSATHA) and 27-46 (SATHASRLAFSVFSHPNVKA).

Its function is as follows. This protein may possess the specific endonuclease activity required for cleavage at the pac site. This Vibrio phage CP-T1 (Bacteriophage CP-T1) protein is Putative packaging signal terminase.